Here is a 275-residue protein sequence, read N- to C-terminus: Thiazole synthase (275 aa).

Lysine 108 serves as the catalytic Schiff-base intermediate with DXP. 1-deoxy-D-xylulose 5-phosphate-binding positions include glycine 169, 196 to 197, and 218 to 219; these read AG and NT.

The protein belongs to the ThiG family. Homotetramer. Forms heterodimers with either ThiH or ThiS.

The protein resides in the cytoplasm. It carries out the reaction [ThiS sulfur-carrier protein]-C-terminal-Gly-aminoethanethioate + 2-iminoacetate + 1-deoxy-D-xylulose 5-phosphate = [ThiS sulfur-carrier protein]-C-terminal Gly-Gly + 2-[(2R,5Z)-2-carboxy-4-methylthiazol-5(2H)-ylidene]ethyl phosphate + 2 H2O + H(+). Its pathway is cofactor biosynthesis; thiamine diphosphate biosynthesis. Catalyzes the rearrangement of 1-deoxy-D-xylulose 5-phosphate (DXP) to produce the thiazole phosphate moiety of thiamine. Sulfur is provided by the thiocarboxylate moiety of the carrier protein ThiS. In vitro, sulfur can be provided by H(2)S. This is Thiazole synthase from Ralstonia pickettii (strain 12J).